We begin with the raw amino-acid sequence, 366 residues long: UDP-N-acetylglucosamine--N-acetylmuramyl-(pentapeptide) pyrophosphoryl-undecaprenol N-acetylglucosamine transferase (366 aa).

UDP-N-acetyl-alpha-D-glucosamine is bound by residues 22–24, N134, R170, S198, I253, and Q298; that span reads TGG.

It belongs to the glycosyltransferase 28 family. MurG subfamily.

The protein resides in the cell inner membrane. The catalysed reaction is di-trans,octa-cis-undecaprenyl diphospho-N-acetyl-alpha-D-muramoyl-L-alanyl-D-glutamyl-meso-2,6-diaminopimeloyl-D-alanyl-D-alanine + UDP-N-acetyl-alpha-D-glucosamine = di-trans,octa-cis-undecaprenyl diphospho-[N-acetyl-alpha-D-glucosaminyl-(1-&gt;4)]-N-acetyl-alpha-D-muramoyl-L-alanyl-D-glutamyl-meso-2,6-diaminopimeloyl-D-alanyl-D-alanine + UDP + H(+). It participates in cell wall biogenesis; peptidoglycan biosynthesis. Functionally, cell wall formation. Catalyzes the transfer of a GlcNAc subunit on undecaprenyl-pyrophosphoryl-MurNAc-pentapeptide (lipid intermediate I) to form undecaprenyl-pyrophosphoryl-MurNAc-(pentapeptide)GlcNAc (lipid intermediate II). This is UDP-N-acetylglucosamine--N-acetylmuramyl-(pentapeptide) pyrophosphoryl-undecaprenol N-acetylglucosamine transferase from Xylella fastidiosa (strain M12).